The sequence spans 209 residues: Glycerol-3-phosphate acyltransferase (209 aa).

Helical transmembrane passes span 5–25, 50–70, 74–94, 115–135, and 151–171; these read IIGM…LWIG, LGFK…TLAA, YFLG…ASLG, ILLA…IFVL, and AIFI…AGIL.

Belongs to the PlsY family. Probably interacts with PlsX.

The protein resides in the cell membrane. It catalyses the reaction an acyl phosphate + sn-glycerol 3-phosphate = a 1-acyl-sn-glycero-3-phosphate + phosphate. It participates in lipid metabolism; phospholipid metabolism. Its function is as follows. Catalyzes the transfer of an acyl group from acyl-phosphate (acyl-PO(4)) to glycerol-3-phosphate (G3P) to form lysophosphatidic acid (LPA). This enzyme utilizes acyl-phosphate as fatty acyl donor, but not acyl-CoA or acyl-ACP. In Limosilactobacillus reuteri (strain DSM 20016) (Lactobacillus reuteri), this protein is Glycerol-3-phosphate acyltransferase.